Here is a 142-residue protein sequence, read N- to C-terminus: MRIINAEGLILGRLASKVAKMLLEGEEVVIVNAEKAIITGNREDIFAKYKQRTELRTRTNPRRGPFYPKRSDEIVRRTVRGMLPWKTDRGRKAFKRLKVYVGVPKEFEGKEFETISEAHMSRLATPKYVTVGEVAKFLGGKF.

It belongs to the universal ribosomal protein uL13 family. As to quaternary structure, part of the 50S ribosomal subunit.

In terms of biological role, this protein is one of the early assembly proteins of the 50S ribosomal subunit, although it is not seen to bind rRNA by itself. It is important during the early stages of 50S assembly. In Thermococcus kodakarensis (strain ATCC BAA-918 / JCM 12380 / KOD1) (Pyrococcus kodakaraensis (strain KOD1)), this protein is Large ribosomal subunit protein uL13.